Consider the following 343-residue polypeptide: Pyridoxal 5'-phosphate synthase subunit PDX1 (343 aa).

Asp73 is a binding site for D-ribose 5-phosphate. The active-site Schiff-base intermediate with D-ribose 5-phosphate is Lys130. Gly202 lines the D-ribose 5-phosphate pocket. Gln214 is a D-glyceraldehyde 3-phosphate binding site. D-ribose 5-phosphate-binding positions include Gly263 and 284–285 (GS).

This sequence belongs to the PdxS/SNZ family.

It catalyses the reaction aldehydo-D-ribose 5-phosphate + D-glyceraldehyde 3-phosphate + L-glutamine = pyridoxal 5'-phosphate + L-glutamate + phosphate + 3 H2O + H(+). It participates in cofactor biosynthesis; pyridoxal 5'-phosphate biosynthesis. In terms of biological role, catalyzes the formation of pyridoxal 5'-phosphate from ribose 5-phosphate (RBP), glyceraldehyde 3-phosphate (G3P) and ammonia. The ammonia is provided by PDX2. Can also use ribulose 5-phosphate and dihydroxyacetone phosphate as substrates, resulting from enzyme-catalyzed isomerization of RBP and G3P, respectively. Also plays an indirect role in resistance to singlet oxygen-generating photosensitizers. The polypeptide is Pyridoxal 5'-phosphate synthase subunit PDX1 (PDX1) (Cercospora nicotianae (Barn spot disease fungus)).